The chain runs to 143 residues: Heat shock protein Hsp-16.48/Hsp-16.49 (143 aa).

Residues 35-140 (HNSFNFSDNI…SSRSIPINFV (106 aa)) enclose the sHSP domain.

The protein belongs to the small heat shock protein (HSP20) family.

The sequence is that of Heat shock protein Hsp-16.48/Hsp-16.49 (hsp-16.48) from Caenorhabditis elegans.